We begin with the raw amino-acid sequence, 368 residues long: PPE family immunomodulator PPE68 (368 aa).

Disordered stretches follow at residues 255 to 280 (LGTS…LLRA) and 312 to 368 (AAAG…EDDW). The span at 312 to 327 (AAAGSSATGGAAPVGA) shows a compositional bias: low complexity. Residues 354–368 (REEDDEDDWDEEDDW) show a composition bias toward acidic residues.

It belongs to the mycobacterial PPE family. In terms of assembly, homodimer. Interacts with PE35. PE35/PPE68 complex interacts with human TLR2.

The protein localises to the secreted. It is found in the cell wall. It localises to the cell membrane. The protein resides in the cell surface. Plays a major role in RD1-associated pathogenesis, and may contribute to the establishment and maintenance of M.tuberculosis infection. Together with PE35, stimulates the secretion of IL-10 and MCP-1 from human macrophages, via the interaction with human Toll-like receptor 2 (TLR2). In Mycobacterium tuberculosis (strain CDC 1551 / Oshkosh), this protein is PPE family immunomodulator PPE68 (PPE68).